An 890-amino-acid chain; its full sequence is DNA mismatch repair protein MutS (890 aa).

634–641 is a binding site for ATP; sequence GPNMGGKS.

Belongs to the DNA mismatch repair MutS family.

Functionally, this protein is involved in the repair of mismatches in DNA. It is possible that it carries out the mismatch recognition step. This protein has a weak ATPase activity. The chain is DNA mismatch repair protein MutS from Burkholderia pseudomallei (strain K96243).